A 144-amino-acid chain; its full sequence is Austinoid biosynthesis clusters protein S (144 aa).

The protein belongs to the trt14 isomerase family. As to quaternary structure, homodimer.

It functions in the pathway secondary metabolite biosynthesis; terpenoid biosynthesis. Its function is as follows. Part of the gene cluster B that mediates the biosynthesis of the fungal meroterpenoid acetoxydehydroaustin. The first step of the pathway is the synthesis of 3,5-dimethylorsellinic acid by the polyketide synthase ausA. 3,5-dimethylorsellinic acid is then prenylated by the polyprenyl transferase ausN. Further epoxidation by the FAD-dependent monooxygenase ausM and cyclization by the probable terpene cyclase ausL lead to the formation of protoaustinoid A. Protoaustinoid A is then oxidized to spiro-lactone preaustinoid A3 by the combined action of the FAD-binding monooxygenases ausB and ausC, and the dioxygenase ausE. Acid-catalyzed keto-rearrangement and ring contraction of the tetraketide portion of preaustinoid A3 by ausJ lead to the formation of preaustinoid A4. The aldo-keto reductase ausK, with the help of ausH, is involved in the next step by transforming preaustinoid A4 into isoaustinone which is in turn hydroxylated by the P450 monooxygenase ausI to form austinolide. The cytochrome P450 monooxygenase ausG then modifies austinolide to austinol. Austinol is further acetylated to austin by the O-acetyltransferase ausP, which spontaneously changes to dehydroaustin. The cytochrome P450 monooxygenase then converts dehydroaustin is into 7-dehydrodehydroaustin. The hydroxylation catalyzed by ausR permits the second O-acetyltransferase ausQ to add an additional acetyl group to the molecule, leading to the formation of acetoxydehydroaustin. Due to genetic rearrangements of the clusters and the subsequent loss of some enzymes, the end product of the Penicillium brasilianum austinoid biosynthesis clusters is acetoxydehydroaustin. AusS is necessary for austinoids production and may play a possible function as a regulator. This is Austinoid biosynthesis clusters protein S from Penicillium brasilianum.